A 210-amino-acid chain; its full sequence is MTTSSHHNKGDNSADLYLASQSPRRRELLAQIGVKVAVLSVDVAEQREVGESPAQYVQRLAYDKAMAGAKLAATQPRSLPCLGSDTIVVIENRVLEKPRDEEDGVAMLLALSGQTHQVMTAVAVATEAKQLMRLSVTDVTFREISRAEAIEYWRTGEPADKAGGYGIQGLGAVFVRELKGSYTAVVGLPLFETKTLLDAFEVPVWQNLAP.

The active-site Proton acceptor is the aspartate 85.

The protein belongs to the Maf family. YhdE subfamily. Requires a divalent metal cation as cofactor.

It localises to the cytoplasm. It carries out the reaction dTTP + H2O = dTMP + diphosphate + H(+). It catalyses the reaction UTP + H2O = UMP + diphosphate + H(+). Functionally, nucleoside triphosphate pyrophosphatase that hydrolyzes dTTP and UTP. May have a dual role in cell division arrest and in preventing the incorporation of modified nucleotides into cellular nucleic acids. The chain is dTTP/UTP pyrophosphatase from Saccharophagus degradans (strain 2-40 / ATCC 43961 / DSM 17024).